The chain runs to 165 residues: MSVNDGVDQMGAEPDIMEFVEQMGGYFESRSLTRLAGRLLGWLLVCDPERQSSEELATALAASSGGISTNARMLIQFGFIERLAVAGDRRTYFRLRPNAFAAGERERIRAMAELQDLADVGLRALGDAPPQRSRRLREMRDLLAYMENVVSDALGRYSQRTGEDD.

An HTH marR-type domain is found at 1 to 151 (MSVNDGVDQM…LLAYMENVVS (151 aa)). The segment at residues 53–76 (SEELATALAASSGGISTNARMLIQ) is a DNA-binding region (H-T-H motif).

In terms of assembly, homodimer.

Controls the expression level of the Mmps2-MmpL2, MmpS4-MmpL4, and MmpS5-MmpL5 transport systems. Also controls its own expression. Acts by binding directly to the promoter regions. The chain is HTH-type transcriptional regulator MmpR5 from Mycobacterium tuberculosis (strain ATCC 25618 / H37Rv).